Reading from the N-terminus, the 353-residue chain is Photosystem II D2 protein (353 aa).

Position 2 is an N-acetylthreonine (T2). T2 bears the Phosphothreonine mark. A helical transmembrane segment spans residues C41–T61. H118 contacts chlorophyll a. Residues G125–P141 traverse the membrane as a helical segment. Pheophytin a is bound by residues Q130 and N143. A helical membrane pass occupies residues V153–S166. Residue H198 participates in chlorophyll a binding. The chain crosses the membrane as a helical span at residues A208–D228. Residues H215 and F262 each coordinate a plastoquinone. Fe cation is bound at residue H215. Residue H269 participates in Fe cation binding. A helical membrane pass occupies residues G279–R295.

This sequence belongs to the reaction center PufL/M/PsbA/D family. As to quaternary structure, PSII is composed of 1 copy each of membrane proteins PsbA, PsbB, PsbC, PsbD, PsbE, PsbF, PsbH, PsbI, PsbJ, PsbK, PsbL, PsbM, PsbT, PsbX, PsbY, PsbZ, Psb30/Ycf12, at least 3 peripheral proteins of the oxygen-evolving complex and a large number of cofactors. It forms dimeric complexes. Requires The D1/D2 heterodimer binds P680, chlorophylls that are the primary electron donor of PSII, and subsequent electron acceptors. It shares a non-heme iron and each subunit binds pheophytin, quinone, additional chlorophylls, carotenoids and lipids. There is also a Cl(-1) ion associated with D1 and D2, which is required for oxygen evolution. The PSII complex binds additional chlorophylls, carotenoids and specific lipids. as cofactor.

It is found in the plastid. It localises to the chloroplast thylakoid membrane. The catalysed reaction is 2 a plastoquinone + 4 hnu + 2 H2O = 2 a plastoquinol + O2. Functionally, photosystem II (PSII) is a light-driven water:plastoquinone oxidoreductase that uses light energy to abstract electrons from H(2)O, generating O(2) and a proton gradient subsequently used for ATP formation. It consists of a core antenna complex that captures photons, and an electron transfer chain that converts photonic excitation into a charge separation. The D1/D2 (PsbA/PsbD) reaction center heterodimer binds P680, the primary electron donor of PSII as well as several subsequent electron acceptors. D2 is needed for assembly of a stable PSII complex. The protein is Photosystem II D2 protein of Oryza nivara (Indian wild rice).